The sequence spans 514 residues: GMP synthase [glutamine-hydrolyzing] (514 aa).

Residues 7–197 (KVLILDFGSQ…LFNICKCERN (191 aa)) form the Glutamine amidotransferase type-1 domain. Cysteine 84 serves as the catalytic Nucleophile. Catalysis depends on residues histidine 171 and glutamate 173. Positions 198-389 (WNMGSFIEYE…LKLPEDIVYR (192 aa)) constitute a GMPS ATP-PPase domain. 225–231 (SGGVDSS) lines the ATP pocket.

Homodimer.

It carries out the reaction XMP + L-glutamine + ATP + H2O = GMP + L-glutamate + AMP + diphosphate + 2 H(+). It participates in purine metabolism; GMP biosynthesis; GMP from XMP (L-Gln route): step 1/1. Functionally, catalyzes the synthesis of GMP from XMP. In Brachyspira hyodysenteriae (strain ATCC 49526 / WA1), this protein is GMP synthase [glutamine-hydrolyzing].